The sequence spans 365 residues: Tetraacyldisaccharide 4'-kinase (365 aa).

68–75 (VVGGAGKT) provides a ligand contact to ATP.

The protein belongs to the LpxK family.

The catalysed reaction is a lipid A disaccharide + ATP = a lipid IVA + ADP + H(+). Its pathway is glycolipid biosynthesis; lipid IV(A) biosynthesis; lipid IV(A) from (3R)-3-hydroxytetradecanoyl-[acyl-carrier-protein] and UDP-N-acetyl-alpha-D-glucosamine: step 6/6. Functionally, transfers the gamma-phosphate of ATP to the 4'-position of a tetraacyldisaccharide 1-phosphate intermediate (termed DS-1-P) to form tetraacyldisaccharide 1,4'-bis-phosphate (lipid IVA). The sequence is that of Tetraacyldisaccharide 4'-kinase from Chlamydia pneumoniae (Chlamydophila pneumoniae).